The sequence spans 1219 residues: Type IV pilus biogenesis factor PilY1 homolog PD_0502 (1219 aa).

A signal peptide spans 1-35 (MVGMSRIILNNLFFFRCVVAVFSAHSLVISGAVHA). A disordered region spans residues 212–234 (GLSTDPLNTEGQPYDPSRHPLNS). Gln958, Asn960, Ile962, and Asp964 together coordinate Ca(2+).

This sequence belongs to the PilY1 family.

The protein localises to the fimbrium. Functionally, one of the three PilY1 homologs of X.fastidiosa, which are involved in bacterial twitching motility as component of the filamentous type IV pili (T4P). This Xylella fastidiosa (strain Temecula1 / ATCC 700964) protein is Type IV pilus biogenesis factor PilY1 homolog PD_0502.